A 346-amino-acid polypeptide reads, in one-letter code: UPF0425 pyridoxal phosphate-dependent protein MK0620 (346 aa).

The residue at position 206 (Lys-206) is an N6-(pyridoxal phosphate)lysine.

Pyridoxal 5'-phosphate serves as cofactor.

This chain is UPF0425 pyridoxal phosphate-dependent protein MK0620, found in Methanopyrus kandleri (strain AV19 / DSM 6324 / JCM 9639 / NBRC 100938).